The primary structure comprises 600 residues: Elongation factor 4 (600 aa).

Residues 5–187 form the tr-type G domain; sequence SRIRNFSIIA…AIVTRLPPPK (183 aa). GTP is bound by residues 17-22 and 134-137; these read DHGKST and NKID.

Belongs to the TRAFAC class translation factor GTPase superfamily. Classic translation factor GTPase family. LepA subfamily.

The protein resides in the cell inner membrane. It catalyses the reaction GTP + H2O = GDP + phosphate + H(+). Its function is as follows. Required for accurate and efficient protein synthesis under certain stress conditions. May act as a fidelity factor of the translation reaction, by catalyzing a one-codon backward translocation of tRNAs on improperly translocated ribosomes. Back-translocation proceeds from a post-translocation (POST) complex to a pre-translocation (PRE) complex, thus giving elongation factor G a second chance to translocate the tRNAs correctly. Binds to ribosomes in a GTP-dependent manner. This chain is Elongation factor 4, found in Rhodospirillum centenum (strain ATCC 51521 / SW).